We begin with the raw amino-acid sequence, 232 residues long: tRNA (guanine-N(1)-)-methyltransferase (232 aa).

S-adenosyl-L-methionine-binding positions include Gly111 and 131-136 (IGDYIL).

This sequence belongs to the RNA methyltransferase TrmD family. In terms of assembly, homodimer.

It localises to the cytoplasm. It catalyses the reaction guanosine(37) in tRNA + S-adenosyl-L-methionine = N(1)-methylguanosine(37) in tRNA + S-adenosyl-L-homocysteine + H(+). Its function is as follows. Specifically methylates guanosine-37 in various tRNAs. The polypeptide is tRNA (guanine-N(1)-)-methyltransferase (Bartonella bacilliformis (strain ATCC 35685 / KC583 / Herrer 020/F12,63)).